The following is a 187-amino-acid chain: Oligoribonuclease (187 aa).

One can recognise an Exonuclease domain in the interval 7–170; sequence LCWLDMEMTG…DDILESIEEM (164 aa). Tyr-128 is an active-site residue.

Belongs to the oligoribonuclease family.

The protein localises to the cytoplasm. 3'-to-5' exoribonuclease specific for small oligoribonucleotides. The polypeptide is Oligoribonuclease (Neisseria meningitidis serogroup B (strain ATCC BAA-335 / MC58)).